The primary structure comprises 20 residues: Putative 18 kDa spermidine-binding protein (20 aa).

Dimer of 18 kDa and 60 kDa subunit.

Its subcellular location is the microsome membrane. It is found in the endoplasmic reticulum membrane. May have spermidine-binding activity. This chain is Putative 18 kDa spermidine-binding protein, found in Zea mays (Maize).